Reading from the N-terminus, the 104-residue chain is uncharacterized protein (104 aa).

Residues 51 to 70 are disordered; the sequence is NPGRSLDNNKDVSDKGRSEF. Residues 57 to 70 are compositionally biased toward basic and acidic residues; it reads DNNKDVSDKGRSEF.

It belongs to the protein-tyrosine phosphatase family.

This is an uncharacterized protein from Xanthomonas campestris pv. campestris (strain ATCC 33913 / DSM 3586 / NCPPB 528 / LMG 568 / P 25).